Consider the following 421-residue polypeptide: MAEQLALVIGGTIGGLLLLLLIGASCCLWRRFCATLTYEELPGTPAMATTAASSGQRDRPCQPHARTQLSRPPAVPFVVPPTLQGRDWVPLHSGEWADAPWDPCPASELLPHTSSGGLGDACMVGAINPELYKFPEDKSETDFPDGCLGRLWFSVEYEQEAERLLVGLIKAQHLQAPSETCSPLVKLYLLPDERRFLQSKTKRKTSNPQFDEHFIFQVSSKTITQRVLKFSVYHVDRQRKHQLLGQVLFPLKNETLVGDCRRVIWRDLEAESLEPPSEFGDLQFCLSYNDYLSRLTVVVLRAKGLRLQEDRGIVSVFVKVSLMNHNKFVKCKKTSAVLGSINPVYNETFSFKADATELDTASLSLTVVQNMEGDKSQQLGRVVVGPYMYTRGRELEHWDEMLSKPKELVKRWHALCRTTEP.

At M1–Q4 the chain is on the extracellular side. Residues L5–W29 form a helical; Signal-anchor for type III membrane protein membrane-spanning segment. Topologically, residues R30–P421 are cytoplasmic. Residues M47 to Q68 are disordered. C2 domains are found at residues C147–I264 and E278–D399.

This sequence belongs to the synaptotagmin family. In terms of assembly, homodimer.

The protein localises to the cell membrane. Its function is as follows. May be involved in the trafficking and exocytosis of secretory vesicles in non-neuronal tissues. The polypeptide is Synaptotagmin-15 (SYT15) (Homo sapiens (Human)).